Consider the following 204-residue polypeptide: ATP phosphoribosyltransferase (204 aa).

Belongs to the ATP phosphoribosyltransferase family. Short subfamily. As to quaternary structure, heteromultimer composed of HisG and HisZ subunits.

It localises to the cytoplasm. It catalyses the reaction 1-(5-phospho-beta-D-ribosyl)-ATP + diphosphate = 5-phospho-alpha-D-ribose 1-diphosphate + ATP. The protein operates within amino-acid biosynthesis; L-histidine biosynthesis; L-histidine from 5-phospho-alpha-D-ribose 1-diphosphate: step 1/9. In terms of biological role, catalyzes the condensation of ATP and 5-phosphoribose 1-diphosphate to form N'-(5'-phosphoribosyl)-ATP (PR-ATP). Has a crucial role in the pathway because the rate of histidine biosynthesis seems to be controlled primarily by regulation of HisG enzymatic activity. This chain is ATP phosphoribosyltransferase, found in Staphylococcus aureus (strain MRSA252).